Consider the following 1068-residue polypeptide: Retinoblastoma-like protein 1 (1068 aa).

Thr332 bears the Phosphothreonine; by CDK2 mark. Residue Thr369 is modified to Phosphothreonine; by CDK4. Thr385 is modified (phosphothreonine; by CDK2). A domain A region spans residues 385–584 (TPVASATQSV…WEALQVSANK (200 aa)). The segment at 385-949 (TPVASATQSV…GRVKSFALKY (565 aa)) is pocket; binds T and E1A. Positions 585 to 780 (VPTCEEVIFP…AQEVHSTGIN (196 aa)) are spacer. A Phosphoserine; by CDK2 and CDK4 modification is found at Ser640. A phosphoserine mark is found at Ser650 and Ser749. Ser762 carries the post-translational modification Phosphoserine; by CDK2. Positions 781–949 (RPKRTGSLAL…GRVKSFALKY (169 aa)) are domain B. Residues Ser964 and Ser975 each carry the phosphoserine; by CDK2 and CDK4 modification. Phosphoserine; by CDK2 is present on Ser988. The residue at position 997 (Thr997) is a Phosphothreonine; by CDK2. Phosphoserine; by CDK2 is present on Ser1009. Residue Ser1041 is modified to Phosphoserine.

This sequence belongs to the retinoblastoma protein (RB) family. In terms of assembly, component of the DREAM complex (also named LINC complex) at least composed of E2F4, E2F5, LIN9, LIN37, LIN52, LIN54, MYBL1, MYBL2, RBL1, RBL2, RBBP4, TFDP1 and TFDP2. The complex exists in quiescent cells where it represses cell cycle-dependent genes. It dissociates in S phase when LIN9, LIN37, LIN52 and LIN54 form a subcomplex that binds to MYBL2. Interacts with AATF. Interacts with KDM5A. Interacts with KMT5B and KMT5C. Interacts with USP4. Interacts with RBBP9. (Microbial infection) Interacts with SV40 and JC virus large T antigens. Large T antigen, but not E1A, binds only to the unphosphorylated form. As to quaternary structure, (Microbial infection) Interacts with JC virus small t antigen. In terms of processing, cell-cycle arrest properties are inactivated by phosphorylation on Thr-332, Ser-640, Ser-964 and Ser-975 by CDK4.

Its subcellular location is the nucleus. Functionally, key regulator of entry into cell division. Directly involved in heterochromatin formation by maintaining overall chromatin structure and, in particular, that of constitutive heterochromatin by stabilizing histone methylation. Recruits and targets histone methyltransferases KMT5B and KMT5C, leading to epigenetic transcriptional repression. Controls histone H4 'Lys-20' trimethylation. Probably acts as a transcription repressor by recruiting chromatin-modifying enzymes to promoters. Potent inhibitor of E2F-mediated trans-activation. May act as a tumor suppressor. This chain is Retinoblastoma-like protein 1 (RBL1), found in Homo sapiens (Human).